A 422-amino-acid polypeptide reads, in one-letter code: S-adenosylmethionine synthase (422 aa).

His-16 lines the ATP pocket. Asp-18 serves as a coordination point for Mg(2+). K(+) is bound at residue Glu-44. 2 residues coordinate L-methionine: Glu-57 and Gln-100. Residues 100 to 110 (QSPDISQGVSA) form a flexible loop region. Residues 175–177 (DGK), 251–252 (KF), Asp-260, 266–267 (RK), Ala-283, and Lys-287 each bind ATP. Residue Asp-260 coordinates L-methionine. Residue Lys-291 participates in L-methionine binding.

This sequence belongs to the AdoMet synthase family. In terms of assembly, homotetramer; dimer of dimers. Requires Mg(2+) as cofactor. It depends on K(+) as a cofactor.

The protein localises to the cytoplasm. It carries out the reaction L-methionine + ATP + H2O = S-adenosyl-L-methionine + phosphate + diphosphate. It functions in the pathway amino-acid biosynthesis; S-adenosyl-L-methionine biosynthesis; S-adenosyl-L-methionine from L-methionine: step 1/1. Functionally, catalyzes the formation of S-adenosylmethionine (AdoMet) from methionine and ATP. The overall synthetic reaction is composed of two sequential steps, AdoMet formation and the subsequent tripolyphosphate hydrolysis which occurs prior to release of AdoMet from the enzyme. This chain is S-adenosylmethionine synthase, found in Rippkaea orientalis (strain PCC 8801 / RF-1) (Cyanothece sp. (strain PCC 8801)).